The following is a 292-amino-acid chain: Retinal homeobox protein Rx3 (292 aa).

The segment at 1–27 (MRLVGSQYKDMEDRLSPSARLVRSPGS) is disordered. An Octapeptide motif motif is present at residues 32 to 39 (HSIESILG). Disordered stretches follow at residues 53–72 (GSGK…DSNK) and 85–107 (SPDL…KKHR). Composition is skewed to basic and acidic residues over residues 57–72 (TGKD…DSNK) and 92–102 (DGGKLSDDENP). Residues 106-165 (HRRNRTTFTTFQLHELERAFEKSHYPDVYSREELALKVNLPEVRVQVWFQNRRAKWRRQE) constitute a DNA-binding region (homeobox). The OAR signature appears at 272–285 (TSIASLRMKAKEHI). Positions 278–282 (RMKAK) match the Nuclear localization signal motif.

The protein belongs to the paired homeobox family. Bicoid subfamily.

It localises to the nucleus. In terms of biological role, plays a critical role in eye formation by regulating the initial specification of retinal cells and/or their subsequent proliferation. This chain is Retinal homeobox protein Rx3 (rx3), found in Danio rerio (Zebrafish).